We begin with the raw amino-acid sequence, 206 residues long: Thiamine-phosphate synthase (206 aa).

4-amino-2-methyl-5-(diphosphooxymethyl)pyrimidine-binding positions include 36–40 and N68; that span reads QLRMK. Positions 69 and 88 each coordinate Mg(2+). S106 contacts 4-amino-2-methyl-5-(diphosphooxymethyl)pyrimidine. 2-[(2R,5Z)-2-carboxy-4-methylthiazol-5(2H)-ylidene]ethyl phosphate is bound at residue 132 to 134; sequence TNT. K135 contacts 4-amino-2-methyl-5-(diphosphooxymethyl)pyrimidine. 2-[(2R,5Z)-2-carboxy-4-methylthiazol-5(2H)-ylidene]ethyl phosphate-binding positions include G162 and 182 to 183; that span reads VS.

Belongs to the thiamine-phosphate synthase family. The cofactor is Mg(2+).

It carries out the reaction 2-[(2R,5Z)-2-carboxy-4-methylthiazol-5(2H)-ylidene]ethyl phosphate + 4-amino-2-methyl-5-(diphosphooxymethyl)pyrimidine + 2 H(+) = thiamine phosphate + CO2 + diphosphate. The enzyme catalyses 2-(2-carboxy-4-methylthiazol-5-yl)ethyl phosphate + 4-amino-2-methyl-5-(diphosphooxymethyl)pyrimidine + 2 H(+) = thiamine phosphate + CO2 + diphosphate. The catalysed reaction is 4-methyl-5-(2-phosphooxyethyl)-thiazole + 4-amino-2-methyl-5-(diphosphooxymethyl)pyrimidine + H(+) = thiamine phosphate + diphosphate. Its pathway is cofactor biosynthesis; thiamine diphosphate biosynthesis; thiamine phosphate from 4-amino-2-methyl-5-diphosphomethylpyrimidine and 4-methyl-5-(2-phosphoethyl)-thiazole: step 1/1. Condenses 4-methyl-5-(beta-hydroxyethyl)thiazole monophosphate (THZ-P) and 2-methyl-4-amino-5-hydroxymethyl pyrimidine pyrophosphate (HMP-PP) to form thiamine monophosphate (TMP). The protein is Thiamine-phosphate synthase of Methanococcus vannielii (strain ATCC 35089 / DSM 1224 / JCM 13029 / OCM 148 / SB).